The sequence spans 1075 residues: mRNA-binding protein PUF2 (1075 aa).

The interval 38–68 (NTNARSVRVSDKRGRSSSTSPQKIGSYRTRA) is disordered. S72 is modified (phosphoserine). Positions 93–105 (TPVVVVPPTSSTP) are enriched in low complexity. The segment at 93 to 112 (TPVVVVPPTSSTPDSLNSTT) is disordered. The residue at position 198 (S198) is a Phosphoserine. The 87-residue stretch at 316-402 (NTISISNVFP…APSTVSFARV (87 aa)) folds into the RRM domain. The 362-residue stretch at 511 to 872 (ELNHLLQNAL…QLLEEVGLSS (362 aa)) folds into the PUM-HD domain. Pumilio repeat units lie at residues 574-611 (AIVM…IMLR), 612-647 (KCNK…NLVT), 649-683 (GVSD…FIFE), 684-719 (SVLS…QLLT), 722-758 (SLII…LILC), and 760-800 (KLVN…KIIH). 2 positions are modified to phosphoserine: S872 and S876. Disordered regions lie at residues 874 to 931 (GISP…LNFN) and 997 to 1075 (NNYN…SYGY). 3 stretches are compositionally biased toward low complexity: residues 901–916 (VSVS…HNSV), 997–1009 (NNYN…SQMN), and 1018–1063 (NNNN…NNNN).

The protein localises to the cytoplasm. In terms of biological role, RNA-binding protein involved in post-transcriptional regulation. Negatively regulates expression of COX17 by binding to the 3'-UTR of COX17 mRNA. Promotes decay of COX17 mRNA by enhancing its rate of deadenylation and subsequent turnover. Predominantly binds to mRNAs encoding membrane-associated proteins with roles in transmembrane transport and vesicular trafficking. The sequence is that of mRNA-binding protein PUF2 (PUF2) from Saccharomyces cerevisiae (strain ATCC 204508 / S288c) (Baker's yeast).